Consider the following 347-residue polypeptide: Ubiquitin thioesterase Otu1 (347 aa).

The Ubiquitin-like domain occupies 5-87; that stretch reads FSVKLKSKKG…LIVEEKAAPA (83 aa). Residues 8–89 are UBX-like; sequence KLKSKKGQFI…VEEKAAPAPA (82 aa). The OTU domain occupies 150 to 274; that stretch reads LLKKVVPADN…GIHYDPLYME (125 aa). The segment at 155–161 is cys-loop; the sequence is VPADNSC. D158 is an active-site residue. Catalysis depends on C161, which acts as the Nucleophile. Positions 213–223 are variable-loop; it reads IQKADSWGGAI. Positions 263-267 are his-loop; it reads FDGIH. I266 lines the substrate pocket. H267 is an active-site residue. An S2 site region spans residues 290–295; that stretch reads LGVYQQ. The C2H2-type zinc finger occupies 317–341; it reads LRCMQCDVRLVGQVQAQEHAKQTGH. H341 is an active-site residue.

It catalyses the reaction Thiol-dependent hydrolysis of ester, thioester, amide, peptide and isopeptide bonds formed by the C-terminal Gly of ubiquitin (a 76-residue protein attached to proteins as an intracellular targeting signal).. In terms of biological role, hydrolase that can remove conjugated ubiquitin from proteins and may therefore play an important regulatory role at the level of protein turnover by preventing degradation. Involved in the regulation of DNA damage repair. The chain is Ubiquitin thioesterase Otu1 from Drosophila melanogaster (Fruit fly).